Here is a 365-residue protein sequence, read N- to C-terminus: Fatty acid hydroxylase vlmA (365 aa).

A disordered region spans residues T20–I41. N-linked (GlcNAc...) asparagine glycosylation occurs at N47. A run of 4 helical transmembrane segments spans residues I62 to I82, V89 to L109, L144 to Y164, and W179 to Y199. Residues L189–T335 form the Fatty acid hydroxylase domain.

This sequence belongs to the sterol desaturase family. TMEM195 subfamily.

Its subcellular location is the membrane. It participates in secondary metabolite biosynthesis. Functionally, fatty acid hydroxylase; part of the gene cluster that mediates the biosynthesis of verlamelin, a lipopeptide that exhibits antifungal activity against plant pathogenic fungi. Verlamelin is a cyclic hexadepsipeptide and is bridged by ester bonding between a 5-hydroxytetradecanoic acid moiety and a carboxyl group on the terminal Val of amide-bonded tetradecanoyl-hexapeptide D-allo-Thr-D-Ala-L-Pro-L-Gln-D-Tyr-L-Val. VlmA and vlmB are altogether regarded as essential components in the biosynthesis of 5-hydroxytetradecanoic acid. VlmA catalyzes the hydroxylation at position C5 of tetradecanoic acid produced in primary metabolism, while the precise function of vlmB still remains to be solved. To be loaded onto the waiting NRPS, 5-hydroxytetradecanoic acid is activated in the form of acyladenylate by the AMP-dependent ligase vlmC. VlmS seems to accept the fatty-acyl intermediate onto the initial module to further elongate amino acid residues by the downstream modules. In addition, in the last module at its C-terminus, vlmS contains a surplus condensation (C) domain that may be involved in cyclization, the last step to form verlamelin. The protein is Fatty acid hydroxylase vlmA of Lecanicillium sp.